The chain runs to 363 residues: NADH-quinone oxidoreductase subunit H (363 aa).

10 helical membrane passes run 29-49 (VLKI…YVVW), 62-82 (GPMY…KLLF), 96-116 (FVIA…VVPF), 127-147 (VGLL…ILAG), 163-183 (AAQV…VMIA), 202-222 (FFDW…VSGV), 238-257 (EIVA…LFFL), 264-286 (ILVS…QGWV), 299-319 (KGGW…YIWF), and 339-359 (FIPL…YGVI).

Belongs to the complex I subunit 1 family. In terms of assembly, NDH-1 is composed of 14 different subunits. Subunits NuoA, H, J, K, L, M, N constitute the membrane sector of the complex.

Its subcellular location is the cell inner membrane. The enzyme catalyses a quinone + NADH + 5 H(+)(in) = a quinol + NAD(+) + 4 H(+)(out). NDH-1 shuttles electrons from NADH, via FMN and iron-sulfur (Fe-S) centers, to quinones in the respiratory chain. The immediate electron acceptor for the enzyme in this species is believed to be ubiquinone. Couples the redox reaction to proton translocation (for every two electrons transferred, four hydrogen ions are translocated across the cytoplasmic membrane), and thus conserves the redox energy in a proton gradient. This subunit may bind ubiquinone. The protein is NADH-quinone oxidoreductase subunit H of Xanthomonas euvesicatoria pv. vesicatoria (strain 85-10) (Xanthomonas campestris pv. vesicatoria).